A 341-amino-acid chain; its full sequence is Cysteine-rich repeat secretory protein 1 (341 aa).

The first 25 residues, 1 to 25 (MFSLPLHQSKLIFLLSFLLIKTLNA), serve as a signal peptide directing secretion. Gnk2-homologous domains follow at residues 28 to 131 (TYLL…SRKI) and 136 to 245 (DQGP…ATFL). 4 disulfide bridges follow: Cys-85–Cys-94, Cys-97–Cys-122, Cys-199–Cys-208, and Cys-211–Cys-236. Positions 247-262 (PPPPPPPPPPPPPPPQ) are enriched in pro residues. Residues 247 to 274 (PPPPPPPPPPPPPPPQRLYGENDTPSSD) are disordered.

It belongs to the cysteine-rich repeat secretory protein family.

It localises to the secreted. This Arabidopsis thaliana (Mouse-ear cress) protein is Cysteine-rich repeat secretory protein 1 (CRRSP1).